Reading from the N-terminus, the 198-residue chain is Single-stranded DNA cytosine deaminase (198 aa).

A Bipartite nuclear localization signal motif is present at residues 1 to 30; it reads MDSLLMKQKKFLYHFKNVRWAKGRHETYLC. An interaction with SUPT6H region spans residues 2-26; that stretch reads DSLLMKQKKFLYHFKNVRWAKGRHE. The CMP/dCMP-type deaminase domain maps to 23–129; that stretch reads GRHETYLCYV…KAEPEGLRRL (107 aa). At T27 the chain carries Phosphothreonine; by PKA. A Phosphoserine; by PKA modification is found at S38. Residues 39-42 form an important for interaction with CTNNBL1 region; the sequence is ATSC. Residue H56 coordinates Zn(2+). E58 acts as the Proton donor in catalysis. Residues C87 and C90 each coordinate Zn(2+). The tract at residues 88-116 is required for interaction with RNF126; it reads YDCARHVAEFLRWNPNLSLRIFTARLYFC. Positions 183 to 198 match the Nuclear export signal motif; the sequence is LYEVDDLRDAFRMLGF.

This sequence belongs to the cytidine and deoxycytidylate deaminase family. Interacts with CTNNBL1; the interaction is important for the immunoglobulin switch activity of AICDA. Interacts (via its NLS) with KPNA1. Interacts with PKA/PRKACA and PRKAR1A/PKR1. Interacts with SUPT6H, TRIM28 and NCL. Directly interacts with MCM3AP/GANP; this interaction may favor AICDA recruitment to immunoglobulin variable region genes, hence promoting somatic hypermutations. It depends on Zn(2+) as a cofactor. In terms of processing, ser-38 is the major site whereas Thr-27 is the minor site of phosphorylation. Phosphorylation regulates its class-switch recombination activity. Post-translationally, probably monoubiquitinated on several residues by RNF126. Expressed in germinal center B-cells (at protein level).

Its subcellular location is the nucleus. It localises to the cytoplasm. The enzyme catalyses a 2'-deoxycytidine in single-stranded DNA + H2O + H(+) = a 2'-deoxyuridine in single-stranded DNA + NH4(+). Its function is as follows. Single-stranded DNA-specific cytidine deaminase. Involved in somatic hypermutation (SHM), gene conversion, and class-switch recombination (CSR) in B-lymphocytes by deaminating C to U during transcription of Ig-variable (V) and Ig-switch (S) region DNA. Required for several crucial steps of B-cell terminal differentiation necessary for efficient antibody responses. May also play a role in the epigenetic regulation of gene expression by participating in DNA demethylation. The sequence is that of Single-stranded DNA cytosine deaminase (Aicda) from Mus musculus (Mouse).